Consider the following 419-residue polypeptide: UDP-N-acetylglucosamine 1-carboxyvinyltransferase (419 aa).

22-23 is a phosphoenolpyruvate binding site; sequence KN. R93 is a binding site for UDP-N-acetyl-alpha-D-glucosamine. Catalysis depends on C117, which acts as the Proton donor. C117 carries the post-translational modification 2-(S-cysteinyl)pyruvic acid O-phosphothioketal. UDP-N-acetyl-alpha-D-glucosamine is bound by residues D307 and I329.

This sequence belongs to the EPSP synthase family. MurA subfamily.

The protein localises to the cytoplasm. It catalyses the reaction phosphoenolpyruvate + UDP-N-acetyl-alpha-D-glucosamine = UDP-N-acetyl-3-O-(1-carboxyvinyl)-alpha-D-glucosamine + phosphate. Its pathway is cell wall biogenesis; peptidoglycan biosynthesis. Functionally, cell wall formation. Adds enolpyruvyl to UDP-N-acetylglucosamine. The sequence is that of UDP-N-acetylglucosamine 1-carboxyvinyltransferase from Shewanella frigidimarina (strain NCIMB 400).